Consider the following 195-residue polypeptide: Large ribosomal subunit protein uL18 (195 aa).

This sequence belongs to the universal ribosomal protein uL18 family. Part of the 50S ribosomal subunit. Contacts the 5S and 23S rRNAs.

Functionally, this is one of the proteins that bind and probably mediate the attachment of the 5S RNA into the large ribosomal subunit, where it forms part of the central protuberance. In Korarchaeum cryptofilum (strain OPF8), this protein is Large ribosomal subunit protein uL18.